Reading from the N-terminus, the 590-residue chain is L-erythrulose kinase (590 aa).

Residues 7–331 (QPSSFARELT…WRAPADAPAF (325 aa)) enclose the DhaK domain. H217 serves as the catalytic Tele-hemiaminal-histidine intermediate. The 203-residue stretch at 366 to 568 (HCVAAALNAA…LAMILDAVSA (203 aa)) folds into the DhaL domain. ADP is bound by residues 398–401 (HGIG), 441–442 (TS), G483, R540, and 553–555 (DAG).

It carries out the reaction L-erythrulose + ATP = L-erythrulose 1-phosphate + ADP + H(+). Its pathway is carbohydrate metabolism. In terms of biological role, involved in catabolism of D-apiose. Catalyzes the phosphorylation of L-erythrulose to L-erythrulose 1-phosphate. Can also phosphorylate D-erythrulose and dihydroxyacetone in vitro. This Pectobacterium atrosepticum (strain SCRI 1043 / ATCC BAA-672) (Erwinia carotovora subsp. atroseptica) protein is L-erythrulose kinase.